Consider the following 209-residue polypeptide: Large ribosomal subunit protein uL3 (209 aa).

Positions 124 to 156 are disordered; sequence KRHNFSGGQRTHGQSDRQRAPGSVGGSSDPSRV.

The protein belongs to the universal ribosomal protein uL3 family. As to quaternary structure, part of the 50S ribosomal subunit. Forms a cluster with proteins L14 and L19.

Its function is as follows. One of the primary rRNA binding proteins, it binds directly near the 3'-end of the 23S rRNA, where it nucleates assembly of the 50S subunit. The sequence is that of Large ribosomal subunit protein uL3 from Pelodictyon phaeoclathratiforme (strain DSM 5477 / BU-1).